Consider the following 166-residue polypeptide: Mitochondrial fission process protein 1 (166 aa).

A run of 2 helical transmembrane segments spans residues S34–A54 and A80–I100. Residue K123 is modified to N6-succinyllysine. A helical membrane pass occupies residues L129 to L149.

This sequence belongs to the MTFP1 family.

The protein localises to the mitochondrion inner membrane. Functionally, involved in the mitochondrial division probably by regulating membrane fission. Loss-of-function induces the release of cytochrome c, which activates the caspase cascade and leads to apoptosis. This is Mitochondrial fission process protein 1 (MTFP1) from Homo sapiens (Human).